The chain runs to 413 residues: 1-deoxy-D-xylulose 5-phosphate reductoisomerase (413 aa).

The NADPH site is built by threonine 28, glycine 29, serine 30, isoleucine 31, glycine 54, arginine 55, asparagine 56, and asparagine 142. 1-deoxy-D-xylulose 5-phosphate is bound at residue lysine 143. Glutamate 144 provides a ligand contact to NADPH. Aspartate 168 contacts Mn(2+). 1-deoxy-D-xylulose 5-phosphate contacts are provided by serine 169, glutamate 170, serine 194, and histidine 217. A Mn(2+)-binding site is contributed by glutamate 170. Glycine 223 provides a ligand contact to NADPH. Serine 230, asparagine 235, lysine 236, and glutamate 239 together coordinate 1-deoxy-D-xylulose 5-phosphate. Glutamate 239 is a binding site for Mn(2+).

It belongs to the DXR family. Mg(2+) is required as a cofactor. Requires Mn(2+) as cofactor.

The catalysed reaction is 2-C-methyl-D-erythritol 4-phosphate + NADP(+) = 1-deoxy-D-xylulose 5-phosphate + NADPH + H(+). It participates in isoprenoid biosynthesis; isopentenyl diphosphate biosynthesis via DXP pathway; isopentenyl diphosphate from 1-deoxy-D-xylulose 5-phosphate: step 1/6. In terms of biological role, catalyzes the NADPH-dependent rearrangement and reduction of 1-deoxy-D-xylulose-5-phosphate (DXP) to 2-C-methyl-D-erythritol 4-phosphate (MEP). This is 1-deoxy-D-xylulose 5-phosphate reductoisomerase from Thermosynechococcus vestitus (strain NIES-2133 / IAM M-273 / BP-1).